A 342-amino-acid chain; its full sequence is tRNA N6-adenosine threonylcarbamoyltransferase (342 aa).

Fe cation is bound by residues histidine 111 and histidine 115. Substrate-binding positions include 134-138 (LVSGG), aspartate 167, glycine 180, and asparagine 276. Residue aspartate 304 coordinates Fe cation.

Belongs to the KAE1 / TsaD family. The cofactor is Fe(2+).

The protein localises to the cytoplasm. The enzyme catalyses L-threonylcarbamoyladenylate + adenosine(37) in tRNA = N(6)-L-threonylcarbamoyladenosine(37) in tRNA + AMP + H(+). Required for the formation of a threonylcarbamoyl group on adenosine at position 37 (t(6)A37) in tRNAs that read codons beginning with adenine. Is involved in the transfer of the threonylcarbamoyl moiety of threonylcarbamoyl-AMP (TC-AMP) to the N6 group of A37, together with TsaE and TsaB. TsaD likely plays a direct catalytic role in this reaction. The sequence is that of tRNA N6-adenosine threonylcarbamoyltransferase from Helicobacter acinonychis (strain Sheeba).